The primary structure comprises 110 residues: Small ribosomal subunit protein bS18 (110 aa).

Low complexity predominate over residues 1-18 (MSEATTTTTTTSAPRPGG). The interval 1 to 41 (MSEATTTTTTTSAPRPGGRPSGPRPDRGPGGPRKKRPFQRR) is disordered. Over residues 32 to 41 (PRKKRPFQRR) the composition is skewed to basic residues.

The protein belongs to the bacterial ribosomal protein bS18 family. Part of the 30S ribosomal subunit. Forms a tight heterodimer with protein bS6.

In terms of biological role, binds as a heterodimer with protein bS6 to the central domain of the 16S rRNA, where it helps stabilize the platform of the 30S subunit. The polypeptide is Small ribosomal subunit protein bS18 (Trichlorobacter lovleyi (strain ATCC BAA-1151 / DSM 17278 / SZ) (Geobacter lovleyi)).